The chain runs to 447 residues: MREIVHLQTGQCGNQIGAAFWQTISGEHGLDGSGVYNGTSDLQLERMNVYFNEASGNKFVPRAVLVDLEPGTMDAVRAGPFGQLFRPDNFVFGQSGAGNNWAKGHYTEGAELVDQVLDVVRREAEGCDCLQGFQITHSLGGGTGAGMGTLLISKIREEFPDRMMATFSVVPSPKVSDTVVEPYNATLSVHQLVENSDETFCIDNEALYDICMRTLKLNNPSYGDLNHLVSAVMSGVTTCLRFPGQLNSDLRKLAVNMVPFPRLHFFMVGFAPLTSRGAHSFRAVTVPELTQQMFDPKNMMAASDFRNGRYLTSSAIFRGKVSMKEVEDQMRNVQNKNSSYFVEWIPNNVQTALCSIPPRGLKMSSTFVGNSTSIQELFKRVGDQFTAMFRRKAFLHWYTGEGMDEMEFTEAESNMNDLVSEYQQYQEASVSEGEEEYDEEAPLEGEE.

8 residues coordinate GTP: Gln11, Glu69, Ser138, Gly142, Thr143, Gly144, Asn204, and Asn226. Glu69 is a Mg(2+) binding site. The interval 424–447 (QYQEASVSEGEEEYDEEAPLEGEE) is disordered. Residues 432 to 447 (EGEEEYDEEAPLEGEE) show a composition bias toward acidic residues.

The protein belongs to the tubulin family. In terms of assembly, dimer of alpha and beta chains. A typical microtubule is a hollow water-filled tube with an outer diameter of 25 nm and an inner diameter of 15 nM. Alpha-beta heterodimers associate head-to-tail to form protofilaments running lengthwise along the microtubule wall with the beta-tubulin subunit facing the microtubule plus end conferring a structural polarity. Microtubules usually have 13 protofilaments but different protofilament numbers can be found in some organisms and specialized cells. Mg(2+) is required as a cofactor.

The protein resides in the cytoplasm. It is found in the cytoskeleton. Its function is as follows. Tubulin is the major constituent of microtubules, a cylinder consisting of laterally associated linear protofilaments composed of alpha- and beta-tubulin heterodimers. Microtubules grow by the addition of GTP-tubulin dimers to the microtubule end, where a stabilizing cap forms. Below the cap, tubulin dimers are in GDP-bound state, owing to GTPase activity of alpha-tubulin. The protein is Tubulin beta chain of Venturia inaequalis (Apple scab fungus).